Consider the following 617-residue polypeptide: MPELRSRTVTHGRNMAGARALMRASGVPGADIGRKPIIAVANSFTEFVPGHTHLAPVGRIVSEAVTAAGGIPREFNTIAVDDGIAMGHGGMLYSLPSRDLIADSVEYMVEAHCADALICISNCDKITPGMLNAALRLNIPTVFVSGGPMESGRATLVDGTVRTLDLVDAMSEAVNDKISDADILRIEENACPTCGSCSGMFTANSMNCLTEAIGLSLPGNGSVLATHTARKTLYENAARTVLDLTRRYYEQDDDSVLPRNIATPAAFGNAMALDIAMGGSTNTILHLLAAAQEAEVSYGLAEMDALSRSVPCLAKVAPNVAKDRTYYMEDVHRAGGIPALLGELHRGGLLNEDVHSVHSPSLADWLKTWDVRGGSPSKEAVELWHAAPGCVRSAEAFSQSERWDTLDEDAEGGCIRSVEHAYSKDGGLAVLRGNLAVDGCVVKTAGVDESIWTFEGPAVVCESQEEAVQKILTQQVKEGDVVVIRYEGPKGGPGMQEMLYPTSYLKGRGLGKACALVTDGRFSGGTSGLSIGHASPEAAAGGTIALVEDGDRIRIDIPNRSIELLVDDAELTRREQALNGVYAPKNRDRKVSAALKAYAAMATSADKGAVRDVSKLG.

D82 contributes to the Mg(2+) binding site. A [2Fe-2S] cluster-binding site is contributed by C123. 2 residues coordinate Mg(2+): D124 and K125. An N6-carboxylysine modification is found at K125. Position 197 (C197) interacts with [2Fe-2S] cluster. Residue E497 participates in Mg(2+) binding. Residue S523 is the Proton acceptor of the active site.

It belongs to the IlvD/Edd family. In terms of assembly, homodimer. Requires [2Fe-2S] cluster as cofactor. The cofactor is Mg(2+).

The catalysed reaction is (2R)-2,3-dihydroxy-3-methylbutanoate = 3-methyl-2-oxobutanoate + H2O. It carries out the reaction (2R,3R)-2,3-dihydroxy-3-methylpentanoate = (S)-3-methyl-2-oxopentanoate + H2O. Its pathway is amino-acid biosynthesis; L-isoleucine biosynthesis; L-isoleucine from 2-oxobutanoate: step 3/4. The protein operates within amino-acid biosynthesis; L-valine biosynthesis; L-valine from pyruvate: step 3/4. Functions in the biosynthesis of branched-chain amino acids. Catalyzes the dehydration of (2R,3R)-2,3-dihydroxy-3-methylpentanoate (2,3-dihydroxy-3-methylvalerate) into 2-oxo-3-methylpentanoate (2-oxo-3-methylvalerate) and of (2R)-2,3-dihydroxy-3-methylbutanoate (2,3-dihydroxyisovalerate) into 2-oxo-3-methylbutanoate (2-oxoisovalerate), the penultimate precursor to L-isoleucine and L-valine, respectively. This is Dihydroxy-acid dehydratase from Streptomyces coelicolor (strain ATCC BAA-471 / A3(2) / M145).